A 440-amino-acid polypeptide reads, in one-letter code: MGQIPRFLSWRNMLVLSLAINFSLILKILKGDRERGDSWDRTAYVSIWPVVSTTASESSSLSSASCNYSKIEEDDDRIINLKFGDPTVYERYWQENGEVTTMVIPGWQSLSYFSDENNLCWFLEPELAKEIVRVHKVVGNAVTQDRFIVVGTGSTQLYQAALYALSPHDDSGPINVVSATPYYSTYPLITDCLKSGLYRWGGDAKTYKEDGPYIELVTSPNNPDGFLRESVVNSTEGILIHDLAYYWPQYTPITSPADHDVMLFTASKSTGHAGIRIGWALVKDRETARKMIEYIELNTIGVSKDSQLRVAKVLKVVSDSCGNVTGKSFFDHSYDAMYERWKLLKQAAKDTKRFSVPDFVSQRCNFFGRVFEPQPAFAWFKCEEGIVDCEKFLREEKKILTKSGKYFGDELSNVRISMLDRDTNFNIFLHRITSSFNSTL.

The chain crosses the membrane as a helical span at residues Phe7–Leu26. Residues Tyr112, Ser154–Thr155, Asn222, Asp242–Tyr245, Thr265–Lys268, and Arg276 each bind pyridoxal 5'-phosphate. Lys268 is subject to N6-(pyridoxal phosphate)lysine.

This sequence belongs to the alliinase family. Pyridoxal 5'-phosphate is required as a cofactor. As to expression, expressed in roots, cotyledons and in the apical parts of hypocotyls. In roots, restricted to the provasculature of meristematic regions. Detected on the inner side of the apical hooks.

It is found in the membrane. It carries out the reaction L-tryptophan + 2-oxoglutarate = indole-3-pyruvate + L-glutamate. The enzyme catalyses L-tryptophan + pyruvate = indole-3-pyruvate + L-alanine. Its pathway is plant hormone metabolism; auxin biosynthesis. With respect to regulation, inhibited by L-kynurenine. In terms of biological role, involved in auxin production. Both TAA1 and TAR2 are required for maintaining proper auxin levels in roots, while TAA1, TAR1 and TAR2 are required for proper embryo patterning. Involved in the maintenance of the root stem cell niches. This chain is Tryptophan aminotransferase-related protein 2 (TAR2), found in Arabidopsis thaliana (Mouse-ear cress).